A 28-amino-acid polypeptide reads, in one-letter code: Unknown protein from spot 154 of 2D-PAGE of etiolated coleoptile (28 aa).

This Zea mays (Maize) protein is Unknown protein from spot 154 of 2D-PAGE of etiolated coleoptile.